Consider the following 62-residue polypeptide: MGWTVTVDTDKCTGDGECVDVCPVEVYELQDGKAVPVNEEECLGCESCVEVCEAGAITVEEN.

2 4Fe-4S ferredoxin-type domains span residues 3–32 (WTVTVDTDKCTGDGECVDVCPVEVYELQDG) and 33–62 (KAVPVNEEECLGCESCVEVCEAGAITVEEN). [3Fe-4S] cluster is bound by residues Cys12 and Cys18. Cys22, Cys42, Cys45, and Cys48 together coordinate [4Fe-4S] cluster. Residue Cys52 coordinates [3Fe-4S] cluster.

As to quaternary structure, homodimer. [3Fe-4S] cluster serves as cofactor. It depends on [4Fe-4S] cluster as a cofactor.

In terms of biological role, ferredoxins are iron-sulfur proteins that transfer electrons in a wide variety of metabolic reactions. This ferredoxin serves as a carrier for pyruvate dehydrogenase. The chain is Ferredoxin-1 from Nitratidesulfovibrio vulgaris (strain DSM 19637 / Miyazaki F) (Desulfovibrio vulgaris).